We begin with the raw amino-acid sequence, 138 residues long: Aspartate 1-decarboxylase (138 aa).

The active-site Schiff-base intermediate with substrate; via pyruvic acid is the Ser-25. Ser-25 is subject to Pyruvic acid (Ser). Substrate is bound at residue Thr-57. Catalysis depends on Tyr-58, which acts as the Proton donor. 73–75 (GAA) is a binding site for substrate.

This sequence belongs to the PanD family. As to quaternary structure, heterooctamer of four alpha and four beta subunits. Requires pyruvate as cofactor. In terms of processing, is synthesized initially as an inactive proenzyme, which is activated by self-cleavage at a specific serine bond to produce a beta-subunit with a hydroxyl group at its C-terminus and an alpha-subunit with a pyruvoyl group at its N-terminus.

It localises to the cytoplasm. The enzyme catalyses L-aspartate + H(+) = beta-alanine + CO2. The protein operates within cofactor biosynthesis; (R)-pantothenate biosynthesis; beta-alanine from L-aspartate: step 1/1. Catalyzes the pyruvoyl-dependent decarboxylation of aspartate to produce beta-alanine. In Renibacterium salmoninarum (strain ATCC 33209 / DSM 20767 / JCM 11484 / NBRC 15589 / NCIMB 2235), this protein is Aspartate 1-decarboxylase.